The primary structure comprises 444 residues: Chromosome partition protein MukF (444 aa).

The tract at residues 212 to 240 is leucine-zipper; it reads LDETSGNLRELQDTLNAAGDKLQAQLLRI.

This sequence belongs to the MukF family. As to quaternary structure, interacts, and probably forms a ternary complex, with MukE and MukB via its C-terminal region. The complex formation is stimulated by calcium or magnesium. It is required for an interaction between MukE and MukB.

It localises to the cytoplasm. Its subcellular location is the nucleoid. Involved in chromosome condensation, segregation and cell cycle progression. May participate in facilitating chromosome segregation by condensation DNA from both sides of a centrally located replisome during cell division. Not required for mini-F plasmid partitioning. Probably acts via its interaction with MukB and MukE. Overexpression results in anucleate cells. It has a calcium binding activity. This is Chromosome partition protein MukF from Haemophilus influenzae (strain PittGG).